The primary structure comprises 71 residues: Protein MTH_1184 (71 aa).

In Methanothermobacter thermautotrophicus (strain ATCC 29096 / DSM 1053 / JCM 10044 / NBRC 100330 / Delta H) (Methanobacterium thermoautotrophicum), this protein is Protein MTH_1184.